A 585-amino-acid polypeptide reads, in one-letter code: Involucrin (585 aa).

The span at 1–15 shows a compositional bias: polar residues; that stretch reads MSQQHTLPVTLSPAL. The segment at 1–132 is disordered; that stretch reads MSQQHTLPVT…LEEEKKLLDQ (132 aa). Gln79 carries the Omega-hydroxyceramide glutamate ester lipid modification. Positions 92 to 115 are enriched in basic and acidic residues; sequence WEQHEEYQKAENPEQQLKQEKTQR. 2 omega-hydroxyceramide glutamate ester lipidation sites follow: Gln118 and Gln133. The disordered stretch occupies residues 149–540; that stretch reads KEQLLELPEQ…KDLEQQKGQL (392 aa). Tandem repeats lie at residues 153-162, 163-172, 173-182, 183-192, 193-202, 203-212, 213-222, 223-232, 233-242, 243-252, 253-262, 263-272, 273-282, 283-292, 293-302, 303-312, 313-322, 323-332, 333-342, 343-352, 353-362, 363-372, and 373-382. The segment at 153-542 is 39 X 10 AA approximate tandem repeats of [LP]-[EKG]-[LHVYQEK]-[PLSQE]-[EQDV]-[QHEKRGA]-Q-[EMVQLP]-[GKLE]-[QHVNLD]; the sequence is LELPEQQEGH…LEQQKGQLEQ (390 aa). A compositionally biased stretch (basic and acidic residues) spans 159 to 178; that stretch reads QEGHLKHLEQQEGQLKHPEQ. Over residues 179–261 the composition is skewed to low complexity; the sequence is QEGQLELPEQ…QLELSEQQEG (83 aa). Residues 262–271 are compositionally biased toward basic and acidic residues; sequence QLKHLEHQEG. Composition is skewed to basic and acidic residues over residues 292–304, 314–328, and 341–360; these read QLKHLDQQEKQPE, KHLEQQEGQPKHLEQ, and GQLKHLEQQEGQLEHLEHQE. Over residues 361–383 the composition is skewed to low complexity; that stretch reads GQLGLPEQQVLQLKQLEKQQGQP. A 24; approximate repeat occupies 383–392; it reads PKHLEEEEGQ. The segment covering 384–393 has biased composition (basic and acidic residues); it reads KHLEEEEGQL. 11 consecutive repeat copies span residues 393 to 402, 403 to 412, 413 to 422, 423 to 432, 433 to 442, 443 to 452, 453 to 462, 463 to 472, 473 to 482, 483 to 492, and 493 to 502. Basic and acidic residues-rich tracts occupy residues 415 to 424 and 431 to 444; these read QQERQVEHLE and KHLEEQEGQLKHLE. Low complexity predominate over residues 445–462; it reads QQQGQLEVPEQQVGQPKN. The span at 479 to 488 shows a compositional bias: basic and acidic residues; the sequence is QVKHLEKQEA. Residue Gln496 forms an Isoglutamyl lysine isopeptide (Gln-Lys) (interchain with K-? in other proteins) linkage. A compositionally biased stretch (basic and acidic residues) spans 501-535; that stretch reads KHLEQQEKHLEHPEQQDGQLKHLEQQEGQLKDLEQ. A 36; approximate repeat occupies 503–512; it reads LEQQEKHLEH. 2 tandem repeats follow at residues 513–522 and 523–532. The stretch at 533-542 is one 39; approximate repeat; it reads LEQQKGQLEQ.

It belongs to the involucrin family. In terms of assembly, directly or indirectly cross-linked to cornifelin (CNFN). Post-translationally, substrate of transglutaminase. Some glutamines and lysines are cross-linked to other involucrin molecules, to other proteins such as keratin, desmoplakin, periplakin and envoplakin, and to lipids like omega-hydroxyceramide. Keratinocytes of epidermis and other stratified squamous epithelia.

The protein localises to the cytoplasm. Its function is as follows. Part of the insoluble cornified cell envelope (CE) of stratified squamous epithelia. This chain is Involucrin (IVL), found in Homo sapiens (Human).